A 218-amino-acid chain; its full sequence is Very-long-chain (3R)-3-hydroxyacyl-CoA dehydratase (218 aa).

The Cytoplasmic portion of the chain corresponds to 1-6 (MKTYLS). Residues 7–29 (IYYLIQFCGHSWIFTNMTTRFLF) traverse the membrane as a helical segment. At 30–38 (FGQDAFADT) the chain is on the lumenal side. A helical membrane pass occupies residues 39–61 (FYSIGLVMQGCQLLSILELAHIL). Residues 62–67 (LGVEQN) lie on the Cytoplasmic side of the membrane. A helical membrane pass occupies residues 68 to 87 (GFLPMFLQVAERFIILFVVI). Topologically, residues 88-96 (TSQEEVQSK) are lumenal. The helical transmembrane segment at 97–116 (YIVCALFFIWNLWDVIRYPY) threads the bilayer. The Cytoplasmic portion of the chain corresponds to 117 to 136 (DMLAAVDTDYSALTWLRHTW). A helical transmembrane segment spans residues 137–159 (WIVAYPLSVLAEAYTIYESLPYF). Catalysis depends on residues tyrosine 141 and glutamate 148. Over 160 to 178 (ESLGTYSFKMALPVSLSFH) the chain is Lumenal. The chain crosses the membrane as a helical span at residues 179 to 201 (FPYILTLYLVLQPVGMLYICSCL). Over 202–218 (WSERKQYFQRKLKLKKN) the chain is Cytoplasmic.

Belongs to the very long-chain fatty acids dehydratase HACD family.

It localises to the endoplasmic reticulum membrane. It catalyses the reaction a very-long-chain (3R)-3-hydroxyacyl-CoA = a very-long-chain (2E)-enoyl-CoA + H2O. It carries out the reaction (3R)-hydroxyhexadecanoyl-CoA = (2E)-hexadecenoyl-CoA + H2O. It participates in lipid metabolism; fatty acid biosynthesis. Catalyzes the third of the four reactions of the long-chain fatty acids elongation cycle. This endoplasmic reticulum-bound enzymatic process, allows the addition of two carbons to the chain of long- and very long-chain fatty acids/VLCFAs per cycle. This enzyme catalyzes the dehydration of the 3-hydroxyacyl-CoA intermediate into trans-2,3-enoyl-CoA, within each cycle of fatty acid elongation. Thereby, it participates in the production of VLCFAs of different chain lengths that are involved in multiple biological processes as precursors of membrane lipids and lipid mediators. The chain is Very-long-chain (3R)-3-hydroxyacyl-CoA dehydratase from Xenopus laevis (African clawed frog).